The sequence spans 1040 residues: Desmoglein-4 (1040 aa).

The first 23 residues, 1-23 (MDWLLFRNICLLILFMVVLGVNS), serve as a signal peptide directing secretion. Positions 24–49 (EFIVEVKELDIENGTTTWQTVRRQKR) are excised as a propeptide. 4 Cadherin domains span residues 50 to 157 (EWIK…PPVF), 158 to 269 (TQNV…FPIL), 270 to 385 (EKTS…GPTF), and 389 to 497 (SMTF…CPVI). Residues 50–633 (EWIKFAAACR…RQSNVGLGPA (584 aa)) are Extracellular-facing. Asn110 carries an N-linked (GlcNAc...) asparagine glycan. N-linked (GlcNAc...) asparagine glycosylation occurs at Asn545. Residues 634-654 (GIGMIILGLLLLFLSPLLLLM) form a helical membrane-spanning segment. Residues 655-1040 (CCCKRRQPEG…RYSNIHYSRQ (386 aa)) are Cytoplasmic-facing. Desmoglein repeat repeat units follow at residues 883-909 (TLSE…IVTE) and 910-940 (TYTA…ETVM). The interval 1015-1040 (QTTRSTSPMTSQHRVTRYSNIHYSRQ) is disordered.

Interacts with JUP.

The protein resides in the cell membrane. It is found in the cell junction. The protein localises to the desmosome. Functionally, a component of desmosome cell-cell junctions which are required for positive regulation of cellular adhesion. Coordinates the transition from proliferation to differentiation in hair follicle keratinocytes. Plays a role in moderating lymphocyte migration to inflamed skin and maintaining homeostasis of the epidermal inflammatory response. The protein is Desmoglein-4 (Dsg4) of Rattus norvegicus (Rat).